Here is a 261-residue protein sequence, read N- to C-terminus: 4-phosphopantoate--beta-alanine ligase (261 aa).

ATP-binding positions include Arg-17, Arg-39, 181 to 183, 187 to 188, and 199 to 200; these read DLN, RS, and NI.

It belongs to the archaeal phosphopantothenate synthetase family. In terms of assembly, homodimer.

The enzyme catalyses (R)-4-phosphopantoate + beta-alanine + ATP = (R)-4'-phosphopantothenate + AMP + diphosphate + H(+). Its pathway is cofactor biosynthesis; coenzyme A biosynthesis. Its activity is regulated as follows. Activity is not affected by 4'-phosphopantothenate or CoA/acetyl-CoA. Functionally, catalyzes the condensation of (R)-4-phosphopantoate and beta-alanine to 4'-phosphopantothenate in the CoA biosynthesis pathway. Cannot use (R)-pantoate as substrate and thus does not display pantothenate synthetase (PS) activity. Displays strict specificity for its natural substrates, 4-phosphopantoate, ATP and beta-alanine. The polypeptide is 4-phosphopantoate--beta-alanine ligase (Thermococcus kodakarensis (strain ATCC BAA-918 / JCM 12380 / KOD1) (Pyrococcus kodakaraensis (strain KOD1))).